The sequence spans 271 residues: Probable septum site-determining protein MinC (271 aa).

Positions 106-125 (RRAPSPKAADDAPAQPEEPR) are disordered. Low complexity predominate over residues 110-119 (SPKAADDAPA).

Belongs to the MinC family. In terms of assembly, interacts with MinD and FtsZ.

Functionally, cell division inhibitor that blocks the formation of polar Z ring septums. Rapidly oscillates between the poles of the cell to destabilize FtsZ filaments that have formed before they mature into polar Z rings. Prevents FtsZ polymerization. The sequence is that of Probable septum site-determining protein MinC from Burkholderia thailandensis (strain ATCC 700388 / DSM 13276 / CCUG 48851 / CIP 106301 / E264).